The sequence spans 214 residues: Adenylate kinase (214 aa).

Residue 14-19 participates in ATP binding; the sequence is GSGKGT. The segment at 32-61 is NMP; it reads SVGKVLRTVMESNTAEADVVKKFIKSGKLV. Residues Arg-38, 59–61, 87–90, and Gln-94 each bind AMP; these read KLV and GYPR. An LID region spans residues 124–162; it reads GRISCTDCGTIYNKLYCMPKINGVCDICNSSSFQNRVDD. Residue Arg-125 coordinates ATP. The Zn(2+) site is built by Cys-128 and Cys-131. ATP is bound at residue 134-135; sequence IY. Positions 148 and 151 each coordinate Zn(2+). AMP is bound by residues Arg-159 and Arg-170. Gln-198 contributes to the ATP binding site.

It belongs to the adenylate kinase family. In terms of assembly, monomer.

The protein localises to the cytoplasm. The catalysed reaction is AMP + ATP = 2 ADP. It participates in purine metabolism; AMP biosynthesis via salvage pathway; AMP from ADP: step 1/1. Its function is as follows. Catalyzes the reversible transfer of the terminal phosphate group between ATP and AMP. Plays an important role in cellular energy homeostasis and in adenine nucleotide metabolism. The protein is Adenylate kinase of Orientia tsutsugamushi (strain Ikeda) (Rickettsia tsutsugamushi).